Reading from the N-terminus, the 546-residue chain is Chaperonin GroEL 1 (546 aa).

ATP contacts are provided by residues 30–33 (TLGP), Lys-51, 87–91 (DGTTT), Gly-415, 479–481 (NAA), and Asp-495. Residues 526–546 (KEDAPMPGGMPGGMGGMGMDM) are disordered. Residues 534 to 546 (GMPGGMGGMGMDM) show a composition bias toward gly residues.

Belongs to the chaperonin (HSP60) family. As to quaternary structure, forms a cylinder of 14 subunits composed of two heptameric rings stacked back-to-back. Interacts with the co-chaperonin GroES.

It localises to the cytoplasm. It catalyses the reaction ATP + H2O + a folded polypeptide = ADP + phosphate + an unfolded polypeptide.. Functionally, together with its co-chaperonin GroES, plays an essential role in assisting protein folding. The GroEL-GroES system forms a nano-cage that allows encapsulation of the non-native substrate proteins and provides a physical environment optimized to promote and accelerate protein folding. This chain is Chaperonin GroEL 1, found in Burkholderia pseudomallei (strain 1106a).